The primary structure comprises 372 residues: Putative glutamate--cysteine ligase 2 (372 aa).

Belongs to the glutamate--cysteine ligase type 2 family. YbdK subfamily. Homodimer.

The enzyme catalyses L-cysteine + L-glutamate + ATP = gamma-L-glutamyl-L-cysteine + ADP + phosphate + H(+). Functionally, ATP-dependent carboxylate-amine ligase which exhibits weak glutamate--cysteine ligase activity. In Salmonella typhimurium (strain LT2 / SGSC1412 / ATCC 700720), this protein is Putative glutamate--cysteine ligase 2 (ybdK).